Reading from the N-terminus, the 158-residue chain is Putative pre-16S rRNA nuclease (158 aa).

Belongs to the YqgF nuclease family.

Its subcellular location is the cytoplasm. Could be a nuclease involved in processing of the 5'-end of pre-16S rRNA. The sequence is that of Putative pre-16S rRNA nuclease from Hahella chejuensis (strain KCTC 2396).